A 336-amino-acid polypeptide reads, in one-letter code: Flap endonuclease 1 (336 aa).

An N-domain region spans residues 1–98; it reads MGVDLGDILS…GTLAARAQMK (98 aa). 7 residues coordinate Mg(2+): aspartate 27, aspartate 80, glutamate 150, glutamate 152, aspartate 171, aspartate 173, and aspartate 234. Residues 114 to 255 form an I-domain region; sequence DSFRYAQATA…RALKLIREHG (142 aa). The interaction with PCNA stretch occupies residues 328-336; sequence GQSTLERWL.

The protein belongs to the XPG/RAD2 endonuclease family. FEN1 subfamily. In terms of assembly, interacts with PCNA. PCNA stimulates the nuclease activity without altering cleavage specificity. It depends on Mg(2+) as a cofactor.

Its function is as follows. Structure-specific nuclease with 5'-flap endonuclease and 5'-3' exonuclease activities involved in DNA replication and repair. During DNA replication, cleaves the 5'-overhanging flap structure that is generated by displacement synthesis when DNA polymerase encounters the 5'-end of a downstream Okazaki fragment. Binds the unpaired 3'-DNA end and kinks the DNA to facilitate 5' cleavage specificity. Cleaves one nucleotide into the double-stranded DNA from the junction in flap DNA, leaving a nick for ligation. Also involved in the base excision repair (BER) pathway. Acts as a genome stabilization factor that prevents flaps from equilibrating into structures that lead to duplications and deletions. Also possesses 5'-3' exonuclease activity on nicked or gapped double-stranded DNA. This Methanothrix thermoacetophila (strain DSM 6194 / JCM 14653 / NBRC 101360 / PT) (Methanosaeta thermophila) protein is Flap endonuclease 1.